The sequence spans 506 residues: Histidine ammonia-lyase (506 aa).

Residues 144 to 146 (ASG) constitute a cross-link (5-imidazolinone (Ala-Gly)). Position 145 is a 2,3-didehydroalanine (Ser) (Ser-145).

The protein belongs to the PAL/histidase family. Post-translationally, contains an active site 4-methylidene-imidazol-5-one (MIO), which is formed autocatalytically by cyclization and dehydration of residues Ala-Ser-Gly.

It localises to the cytoplasm. It catalyses the reaction L-histidine = trans-urocanate + NH4(+). Its pathway is amino-acid degradation; L-histidine degradation into L-glutamate; N-formimidoyl-L-glutamate from L-histidine: step 1/3. This chain is Histidine ammonia-lyase, found in Legionella pneumophila subsp. pneumophila (strain Philadelphia 1 / ATCC 33152 / DSM 7513).